A 388-amino-acid polypeptide reads, in one-letter code: Succinate--CoA ligase [ADP-forming] subunit beta (388 aa).

Positions 9–244 constitute an ATP-grasp domain; sequence KQLFAEYGLP…PSQDDPREAH (236 aa). ATP-binding positions include K46, 53-55, E99, T102, and E107; that span reads GRG. Residues N199 and D213 each contribute to the Mg(2+) site. Substrate-binding positions include N264 and 321 to 323; that span reads GIV.

The protein belongs to the succinate/malate CoA ligase beta subunit family. As to quaternary structure, heterotetramer of two alpha and two beta subunits. The cofactor is Mg(2+).

It catalyses the reaction succinate + ATP + CoA = succinyl-CoA + ADP + phosphate. It carries out the reaction GTP + succinate + CoA = succinyl-CoA + GDP + phosphate. The protein operates within carbohydrate metabolism; tricarboxylic acid cycle; succinate from succinyl-CoA (ligase route): step 1/1. Functionally, succinyl-CoA synthetase functions in the citric acid cycle (TCA), coupling the hydrolysis of succinyl-CoA to the synthesis of either ATP or GTP and thus represents the only step of substrate-level phosphorylation in the TCA. The beta subunit provides nucleotide specificity of the enzyme and binds the substrate succinate, while the binding sites for coenzyme A and phosphate are found in the alpha subunit. The sequence is that of Succinate--CoA ligase [ADP-forming] subunit beta from Pseudomonas syringae pv. syringae (strain B728a).